The following is a 134-amino-acid chain: Galectin-1 (134 aa).

Position 1 is an N-acetylalanine (Ala1). The Galectin domain occupies 4-134 (GVAVTNLNLK…GLAFKSITTE (131 aa)). Residues 45-49 (HFNAR), His53, Asn62, and 69-72 (WGSE) each bind a beta-D-galactoside.

As to quaternary structure, homodimer.

Its subcellular location is the secreted. It localises to the extracellular space. The protein localises to the extracellular matrix. In terms of biological role, may regulate cell apoptosis and cell differentiation. Binds beta-galactoside and a wide array of complex carbohydrates. In Rhinella arenarum (Argentine common toad), this protein is Galectin-1.